Here is a 236-residue protein sequence, read N- to C-terminus: DNA repair protein RecO (236 aa).

It belongs to the RecO family.

In terms of biological role, involved in DNA repair and RecF pathway recombination. The chain is DNA repair protein RecO from Rickettsia typhi (strain ATCC VR-144 / Wilmington).